We begin with the raw amino-acid sequence, 186 residues long: Elongation factor P (186 aa).

It belongs to the elongation factor P family.

The protein localises to the cytoplasm. It participates in protein biosynthesis; polypeptide chain elongation. Involved in peptide bond synthesis. Stimulates efficient translation and peptide-bond synthesis on native or reconstituted 70S ribosomes in vitro. Probably functions indirectly by altering the affinity of the ribosome for aminoacyl-tRNA, thus increasing their reactivity as acceptors for peptidyl transferase. The polypeptide is Elongation factor P (Acidobacterium capsulatum (strain ATCC 51196 / DSM 11244 / BCRC 80197 / JCM 7670 / NBRC 15755 / NCIMB 13165 / 161)).